Consider the following 1072-residue polypeptide: Netrin receptor unc-5 (1072 aa).

The signal sequence occupies residues Met-1–Gly-30. Over Glu-31–Leu-440 the chain is Extracellular. The interval Leu-77–Ser-100 is disordered. The N-linked (GlcNAc...) asparagine glycan is linked to Asn-79. In terms of domain architecture, Ig-like spans Pro-128–Thr-224. Cystine bridges form between Cys-149–Cys-207, Cys-253–Cys-303, Cys-336–Cys-375, Cys-338–Cys-378, and Cys-352–Cys-364. The Ig-like C2-type domain maps to Lys-232–Ser-314. N-linked (GlcNAc...) asparagine glycosylation occurs at Asn-300. TSP type-1 domains are found at residues Asn-324–Pro-379 and Met-398–Gln-499. Residues Leu-441 to Val-461 traverse the membrane as a helical segment. The Cytoplasmic portion of the chain corresponds to Gly-462–Ile-1072. Residues Ser-654–Pro-802 form the ZU5 domain. The 88-residue stretch at Leu-980–Ile-1067 folds into the Death domain.

It belongs to the unc-5 family. Post-translationally, phosphorylated on different cytoplasmic tyrosine residues. In terms of tissue distribution, prior to gastrulation, it is strongly expressed in the presumptive mesoderm. Mesodermal expression begins to fade during stages 13-14, persisting only in the cells that form the dorsal vessel. Expressed within the CNS from late stage 13, shortly after the first axons have extended. Detected in several dispersed clusters of cells within the CNS, increasing in number as development proceeds. Also expressed in the peripheral and exit glia, which migrate laterally out of the CNS between stages 14 and 17. Strongly expressed in motor axons that exit the CNS ipsilaterally via the segmental nerve root (SN). Not expressed on either commissural or longitudinal axons within the CNS, nor on motor axons that exit via the intersegmental nerve (ISN). In the periphery, it is detected on all branches of the SN. Also expressed at high level in exit and peripheral glia along both the SN and ISN.

Its subcellular location is the membrane. Functionally, receptor for netrin required for motor axon guidance. Mediates both short- and long-range axon motor repulsion in the developing nervous system upon ligand binding. Also involved in glial migration. While short-range repulsion requires both fra and unc-5, long-range repulsion only requires unc-5. This is Netrin receptor unc-5 (unc-5) from Drosophila melanogaster (Fruit fly).